A 373-amino-acid chain; its full sequence is tRNA 2-selenouridine synthase (373 aa).

Residues 12-136 enclose the Rhodanese domain; sequence FINDRPMMDA…MRGFLLETTE (125 aa). Cys95 serves as the catalytic S-selanylcysteine intermediate.

This sequence belongs to the SelU family. As to quaternary structure, monomer.

It catalyses the reaction 5-methylaminomethyl-2-thiouridine(34) in tRNA + selenophosphate + (2E)-geranyl diphosphate + H2O + H(+) = 5-methylaminomethyl-2-selenouridine(34) in tRNA + (2E)-thiogeraniol + phosphate + diphosphate. The enzyme catalyses 5-methylaminomethyl-2-thiouridine(34) in tRNA + (2E)-geranyl diphosphate = 5-methylaminomethyl-S-(2E)-geranyl-thiouridine(34) in tRNA + diphosphate. It carries out the reaction 5-methylaminomethyl-S-(2E)-geranyl-thiouridine(34) in tRNA + selenophosphate + H(+) = 5-methylaminomethyl-2-(Se-phospho)selenouridine(34) in tRNA + (2E)-thiogeraniol. The catalysed reaction is 5-methylaminomethyl-2-(Se-phospho)selenouridine(34) in tRNA + H2O = 5-methylaminomethyl-2-selenouridine(34) in tRNA + phosphate. In terms of biological role, involved in the post-transcriptional modification of the uridine at the wobble position (U34) of tRNA(Lys), tRNA(Glu) and tRNA(Gln). Catalyzes the conversion of 2-thiouridine (S2U-RNA) to 2-selenouridine (Se2U-RNA). Acts in a two-step process involving geranylation of 2-thiouridine (S2U) to S-geranyl-2-thiouridine (geS2U) and subsequent selenation of the latter derivative to 2-selenouridine (Se2U) in the tRNA chain. The chain is tRNA 2-selenouridine synthase from Ectopseudomonas mendocina (strain ymp) (Pseudomonas mendocina).